We begin with the raw amino-acid sequence, 99 residues long: Acylphosphatase (99 aa).

The Acylphosphatase-like domain maps to 5–97 (VRQIVIRGRV…RPGERFSQLP (93 aa)). Catalysis depends on residues R20 and N38.

The protein belongs to the acylphosphatase family.

It catalyses the reaction an acyl phosphate + H2O = a carboxylate + phosphate + H(+). The protein is Acylphosphatase (acyP) of Nitrobacter hamburgensis (strain DSM 10229 / NCIMB 13809 / X14).